Here is a 188-residue protein sequence, read N- to C-terminus: Elongation factor P (188 aa).

N6-(3,6-diaminohexanoyl)-5-hydroxylysine is present on K34.

This sequence belongs to the elongation factor P family. May be beta-lysylated on the epsilon-amino group of Lys-34 by the combined action of EpmA and EpmB, and then hydroxylated on the C5 position of the same residue by EpmC (if this protein is present). Lysylation is critical for the stimulatory effect of EF-P on peptide-bond formation. The lysylation moiety may extend toward the peptidyltransferase center and stabilize the terminal 3-CCA end of the tRNA. Hydroxylation of the C5 position on Lys-34 may allow additional potential stabilizing hydrogen-bond interactions with the P-tRNA.

The protein resides in the cytoplasm. It functions in the pathway protein biosynthesis; polypeptide chain elongation. Its function is as follows. Involved in peptide bond synthesis. Alleviates ribosome stalling that occurs when 3 or more consecutive Pro residues or the sequence PPG is present in a protein, possibly by augmenting the peptidyl transferase activity of the ribosome. Modification of Lys-34 is required for alleviation. In Histophilus somni (strain 129Pt) (Haemophilus somnus), this protein is Elongation factor P.